We begin with the raw amino-acid sequence, 687 residues long: Dictomallein (687 aa).

Disordered stretches follow at residues 1 to 45 and 73 to 112; these read MGNG…SRRL and TAGG…STSA. The Peptidase M66 domain occupies 233–501; that stretch reads PVFGTDADVQ…QAWIASRVLA (269 aa). Position 393 (H393) interacts with Zn(2+). The active site involves E394. Positions 397 and 403 each coordinate Zn(2+).

This sequence belongs to the dictomallein family. Zn(2+) is required as a cofactor.

The polypeptide is Dictomallein (dtmL) (Burkholderia pseudomallei (strain 1710b)).